A 290-amino-acid polypeptide reads, in one-letter code: uncharacterized protein (290 aa).

2 disordered regions span residues 17-91 (QTIS…EKNS) and 220-259 (DKASEPINGEEKEEGEKDGNAEQGKQKEVQDEQEEVQMPN). Residues 40 to 50 (NITTHLSTGNL) are compositionally biased toward polar residues. A compositionally biased stretch (basic residues) spans 66–83 (STKKGKRVSKPGTKKKEK). The span at 233-249 (EGEKDGNAEQGKQKEVQ) shows a compositional bias: basic and acidic residues.

This is an uncharacterized protein from Saccharomyces cerevisiae (strain ATCC 204508 / S288c) (Baker's yeast).